Reading from the N-terminus, the 66-residue chain is MLKNFKNFTLEDMKAKRLELKKEYLDLRFKSVVGHVENPLKKREIRRDIARLNTMICEYKLGIRKV.

It belongs to the universal ribosomal protein uL29 family.

The polypeptide is Large ribosomal subunit protein uL29 (Borreliella afzelii (strain PKo) (Borrelia afzelii)).